A 269-amino-acid chain; its full sequence is 4-hydroxy-tetrahydrodipicolinate reductase (269 aa).

NAD(+) is bound by residues 8–13 and E34; that span reads GAAGRM. An NADP(+)-binding site is contributed by R35. NAD(+) contacts are provided by residues 98–100 and 122–125; these read GTT and APNY. The active-site Proton donor/acceptor is the H155. Position 156 (H156) interacts with (S)-2,3,4,5-tetrahydrodipicolinate. The Proton donor role is filled by K159. 165–166 is a binding site for (S)-2,3,4,5-tetrahydrodipicolinate; sequence GT.

It belongs to the DapB family.

It localises to the cytoplasm. The enzyme catalyses (S)-2,3,4,5-tetrahydrodipicolinate + NAD(+) + H2O = (2S,4S)-4-hydroxy-2,3,4,5-tetrahydrodipicolinate + NADH + H(+). It carries out the reaction (S)-2,3,4,5-tetrahydrodipicolinate + NADP(+) + H2O = (2S,4S)-4-hydroxy-2,3,4,5-tetrahydrodipicolinate + NADPH + H(+). It functions in the pathway amino-acid biosynthesis; L-lysine biosynthesis via DAP pathway; (S)-tetrahydrodipicolinate from L-aspartate: step 4/4. Functionally, catalyzes the conversion of 4-hydroxy-tetrahydrodipicolinate (HTPA) to tetrahydrodipicolinate. The chain is 4-hydroxy-tetrahydrodipicolinate reductase from Vibrio cholerae serotype O1 (strain ATCC 39315 / El Tor Inaba N16961).